The primary structure comprises 418 residues: tRNA wybutosine-synthesizing protein 2 (418 aa).

Residues Ser228, Lys235, 275-276 (EI), and 302-303 (EN) each bind S-adenosyl-L-methionine.

The protein belongs to the class I-like SAM-binding methyltransferase superfamily. TRM5/TYW2 family.

It localises to the cytoplasm. Its subcellular location is the nucleus. The catalysed reaction is 4-demethylwyosine(37) in tRNA(Phe) + S-adenosyl-L-methionine = 4-demethyl-7-[(3S)-3-amino-3-carboxypropyl]wyosine(37) in tRNA(Phe) + S-methyl-5'-thioadenosine + H(+). The protein operates within tRNA modification; wybutosine-tRNA(Phe) biosynthesis. Functionally, S-adenosyl-L-methionine-dependent transferase that acts as a component of the wybutosine biosynthesis pathway. Wybutosine is a hyper modified guanosine with a tricyclic base found at the 3'-position adjacent to the anticodon of eukaryotic phenylalanine tRNA. Catalyzes the transfer of the alpha-amino-alpha-carboxypropyl (acp) group from S-adenosyl-L-methionine to the C-7 position of 4-demethylwyosine (imG-14) to produce wybutosine-86. The polypeptide is tRNA wybutosine-synthesizing protein 2 (trm12) (Schizosaccharomyces pombe (strain 972 / ATCC 24843) (Fission yeast)).